A 202-amino-acid chain; its full sequence is 7-cyano-7-deazaguanine synthase 1 (202 aa).

7–17 provides a ligand contact to ATP; sequence MSGGLDSSSAA. Cys166, Cys174, Cys177, and Cys180 together coordinate Zn(2+).

Belongs to the QueC family. The cofactor is Zn(2+).

It carries out the reaction 7-carboxy-7-deazaguanine + NH4(+) + ATP = 7-cyano-7-deazaguanine + ADP + phosphate + H2O + H(+). Its pathway is purine metabolism; 7-cyano-7-deazaguanine biosynthesis. In terms of biological role, catalyzes the ATP-dependent conversion of 7-carboxy-7-deazaguanine (CDG) to 7-cyano-7-deazaguanine (preQ(0)). The protein is 7-cyano-7-deazaguanine synthase 1 (queC1) of Sulfurisphaera tokodaii (strain DSM 16993 / JCM 10545 / NBRC 100140 / 7) (Sulfolobus tokodaii).